Here is a 202-residue protein sequence, read N- to C-terminus: Large ribosomal subunit protein uL18 (202 aa).

The protein belongs to the universal ribosomal protein uL18 family. Part of the 50S ribosomal subunit. Contacts the 5S and 23S rRNAs.

Its function is as follows. This is one of the proteins that bind and probably mediate the attachment of the 5S RNA into the large ribosomal subunit, where it forms part of the central protuberance. In Methanopyrus kandleri (strain AV19 / DSM 6324 / JCM 9639 / NBRC 100938), this protein is Large ribosomal subunit protein uL18.